The primary structure comprises 178 residues: Fatty-acid and retinol-binding protein 1 (178 aa).

A signal peptide spans 1–16 (MYHQLILMALIGVIMA). N-linked (GlcNAc...) asparagine glycans are attached at residues N44 and N75. Coiled-coil stretches lie at residues 67–89 (DAAL…ELRN) and 122–154 (QKLD…LKAT). The N-linked (GlcNAc...) asparagine glycan is linked to N157.

The protein belongs to the fatty-acid and retinol-binding protein (FARBP) family. Post-translationally, N-glycosylated.

It is found in the secreted. Its function is as follows. Binds retinol and different fatty acids. The chain is Fatty-acid and retinol-binding protein 1 from Onchocerca dukei (Filarial nematode worm).